We begin with the raw amino-acid sequence, 852 residues long: Metastasis-associated in colon cancer protein 1 (852 aa).

Position 19 is a phosphoserine (Ser-19). The ZU5 domain maps to 212-349 (VTIACKVNHQ…LSQVMYLVVA (138 aa)). In terms of domain architecture, SH3 spans 549 to 619 (NFSNYGVTLK…HCKNVKVISK (71 aa)).

Interacts with FASLG. As to expression, preferentially expressed in metastasizing tumors.

It localises to the cytoplasm. The protein resides in the nucleus. Functionally, acts as a transcription activator for MET and as a key regulator of HGF-MET signaling. Promotes cell motility, proliferation and hepatocyte growth factor (HGF)-dependent scattering in vitro and tumor growth and metastasis in vivo. This chain is Metastasis-associated in colon cancer protein 1 (MACC1), found in Homo sapiens (Human).